Consider the following 644-residue polypeptide: Protein SNOWY COTYLEDON 3 (644 aa).

3 disordered regions span residues 1–129 (MVAA…TRTE), 162–252 (ETAT…DGRL), and 290–414 (SDTD…SRVR). A compositionally biased stretch (low complexity) spans 53 to 77 (SPSPSHSTTTTTTTATSTSTSSSSS). Positions 91-112 (LSRTTNSASNLVYTPSSLPKRS) are enriched in polar residues. Basic and acidic residues predominate over residues 172–190 (CTPERRRATPVRDQRENSK). 2 stretches are compositionally biased toward polar residues: residues 290 to 302 (SDTD…STNG) and 314 to 332 (TRSL…QETN). Composition is skewed to low complexity over residues 343–370 (SPQC…SSDS) and 397–412 (ATAT…SPSR). Residues 463 to 466 (QWRF) carry the QWRF motif motif.

The protein belongs to the QWRF family. As to expression, expressed in young developing tissues, such as seedlings, roots, flowers, buds and young siliques, and to a lesser extent in mature green tissues.

The protein localises to the peroxisome. Probable microtubule-associated peroxisomal protein required for chloroplast biogenesis and for the formation of the prolamellar body and prothylakoids in etioplasts. Not involved in peroxisomal metabolism, including mobilization of storage compounds during germination, fatty acid beta-oxydation or photorespiration. The chain is Protein SNOWY COTYLEDON 3 (SCO3) from Arabidopsis thaliana (Mouse-ear cress).